The chain runs to 222 residues: Putative cobalt transport protein CbiM (222 aa).

A run of 6 helical transmembrane segments spans residues 8-28, 43-63, 75-95, 107-127, 134-154, and 178-198; these read LPME…GYGI, PLLA…LPSV, LGAI…VLLF, TLGA…YLVF, LNIT…TYLT, and IFAI…ALLW.

It belongs to the CbiM family. Forms an energy-coupling factor (ECF) transporter complex composed of an ATP-binding protein (A component, CbiO), a transmembrane protein (T component, CbiQ) and 2 possible substrate-capture proteins (S components, CbiM and CbiN) of unknown stoichimetry.

Its subcellular location is the cell membrane. Its pathway is cofactor biosynthesis; adenosylcobalamin biosynthesis. Part of the energy-coupling factor (ECF) transporter complex CbiMNOQ involved in cobalt import. The chain is Putative cobalt transport protein CbiM from Methanococcus voltae (strain ATCC BAA-1334 / A3).